The sequence spans 298 residues: Heme A synthase (298 aa).

The Cytoplasmic segment spans residues 1–6 (MHRSLK). A helical membrane pass occupies residues 7 to 27 (IFGTLTSIGMVIVLMQGALVT). Residues 28-62 (KTESGEGCGATWPLCFGEVIPTNPAIETIIEYSHR) lie on the Extracellular side of the membrane. Cys-35 and Cys-42 form a disulfide bridge. Residue Glu-58 is part of the active site. Residue His-61 participates in heme o binding. The chain crosses the membrane as a helical span at residues 63-83 (IVSGLLGAMVIILAIWAWRKL). Residues 84 to 92 (SHIRETKVM) are Cytoplasmic-facing. A helical transmembrane segment spans residues 93–113 (AILAVLFIIFQGLLGAGAVVF). Residues 114 to 117 (GQSH) are Extracellular-facing. A helical transmembrane segment spans residues 118–138 (AILALHFGISAISLATVVLLT). A heme o-binding site is contributed by His-123. Residues 139-158 (TLAFEDGKPNPPALIVKKGY) are Cytoplasmic-facing. The helical transmembrane segment at 159 to 179 (KGYILAVFAYCYAVIYTGAYV) threads the bilayer. Topologically, residues 180-209 (KHTQATLACGDFPLCNGQWIPMLSGPVGAH) are extracellular. An intrachain disulfide couples Cys-188 to Cys-194. The helical transmembrane segment at 210-230 (FFHRVAGTLLLILLVVALIWT) threads the bilayer. His-212 is a binding site for heme b. Residues 231-244 (LRKYSHYRSLVWTH) lie on the Cytoplasmic side of the membrane. Residues 245–265 (ILCVILVLTQYATGISIVLTG) traverse the membrane as a helical segment. The Extracellular portion of the chain corresponds to 266 to 271 (NELFVA). The chain crosses the membrane as a helical span at residues 272 to 292 (MMHALIVSILFTTLCYIVMIL). His-274 is a binding site for heme b. The Cytoplasmic portion of the chain corresponds to 293-298 (SRNKAV).

The protein belongs to the COX15/CtaA family. Type 1 subfamily. As to quaternary structure, interacts with CtaB. Heme b serves as cofactor.

Its subcellular location is the cell membrane. It catalyses the reaction Fe(II)-heme o + 2 A + H2O = Fe(II)-heme a + 2 AH2. The protein operates within porphyrin-containing compound metabolism; heme A biosynthesis; heme A from heme O: step 1/1. Its function is as follows. Catalyzes the conversion of heme O to heme A by two successive hydroxylations of the methyl group at C8. The first hydroxylation forms heme I, the second hydroxylation results in an unstable dihydroxymethyl group, which spontaneously dehydrates, resulting in the formyl group of heme A. This chain is Heme A synthase, found in Halalkalibacterium halodurans (strain ATCC BAA-125 / DSM 18197 / FERM 7344 / JCM 9153 / C-125) (Bacillus halodurans).